Consider the following 146-residue polypeptide: Large ribosomal subunit protein eL28 (146 aa).

The disordered stretch occupies residues Val123 to His146.

The protein belongs to the eukaryotic ribosomal protein eL28 family.

This is Large ribosomal subunit protein eL28 from Trypanosoma cruzi.